A 372-amino-acid polypeptide reads, in one-letter code: Spermidine/putrescine import ATP-binding protein PotA (372 aa).

The ABC transporter domain maps to Val12–Ile250. Residue Gly48 to Thr55 participates in ATP binding.

This sequence belongs to the ABC transporter superfamily. Spermidine/putrescine importer (TC 3.A.1.11.1) family. The complex is composed of two ATP-binding proteins (PotA), two transmembrane proteins (PotB and PotC) and a solute-binding protein (PotD).

It is found in the cell inner membrane. The catalysed reaction is ATP + H2O + polyamine-[polyamine-binding protein]Side 1 = ADP + phosphate + polyamineSide 2 + [polyamine-binding protein]Side 1.. Its function is as follows. Part of the ABC transporter complex PotABCD involved in spermidine/putrescine import. Responsible for energy coupling to the transport system. In Pseudomonas fluorescens (strain ATCC BAA-477 / NRRL B-23932 / Pf-5), this protein is Spermidine/putrescine import ATP-binding protein PotA.